A 70-amino-acid chain; its full sequence is Venom antimicrobial peptide-6 (70 aa).

Positions 1–23 (MKSQTFFLLFLVVFLLAITQSEA) are cleaved as a signal peptide. A Phenylalanine amide modification is found at Phe36. The propeptide occupies 40–70 (SLRDMDTMKYLYDPSLSAADLKTLQKLMENY).

It belongs to the non-disulfide-bridged peptide (NDBP) superfamily. Short antimicrobial peptide (group 4) family. Expressed by the venom gland.

The protein resides in the secreted. Its subcellular location is the target cell membrane. Functionally, amphipathic peptide that exhibits extensive cytolytic activities against both prokaryotic and eukaryotic cells. Is more potent against Gram-positive bacteria (lethal concentration (LC)=0.25-2.9 uM) than against Gram-negative bacteria (LC=6.2-&gt;50 uM), and fungi ((LC)=14.1-&gt;50 uM). Shows hemolytic activity against rabbit erythrocytes (37.7% of inhibition at 6.25 uM) and cytolysis against rat dorsal root ganglions. In vivo, intravenous injection into mice tail provokes uncomfortable symptoms with a death rate of 12.5%. The sequence is that of Venom antimicrobial peptide-6 from Mesobuthus eupeus (Lesser Asian scorpion).